The sequence spans 326 residues: Beta-ketoacyl-[acyl-carrier-protein] synthase III (326 aa).

Catalysis depends on residues Cys120 and His253. The interval 254–258 is ACP-binding; sequence QANIR. Asn283 is an active-site residue.

It belongs to the thiolase-like superfamily. FabH family. In terms of assembly, homodimer.

It localises to the cytoplasm. The enzyme catalyses malonyl-[ACP] + acetyl-CoA + H(+) = 3-oxobutanoyl-[ACP] + CO2 + CoA. The protein operates within lipid metabolism; fatty acid biosynthesis. Functionally, catalyzes the condensation reaction of fatty acid synthesis by the addition to an acyl acceptor of two carbons from malonyl-ACP. Catalyzes the first condensation reaction which initiates fatty acid synthesis and may therefore play a role in governing the total rate of fatty acid production. Possesses both acetoacetyl-ACP synthase and acetyl transacylase activities. Its substrate specificity determines the biosynthesis of branched-chain and/or straight-chain of fatty acids. In Ralstonia pickettii (strain 12J), this protein is Beta-ketoacyl-[acyl-carrier-protein] synthase III.